We begin with the raw amino-acid sequence, 270 residues long: UPF0354 protein BCAH187_A4826 (270 aa).

Belongs to the UPF0354 family.

In Bacillus cereus (strain AH187), this protein is UPF0354 protein BCAH187_A4826.